The following is a 303-amino-acid chain: Probable 5-dehydro-4-deoxyglucarate dehydratase (303 aa).

This sequence belongs to the DapA family.

The catalysed reaction is 5-dehydro-4-deoxy-D-glucarate + H(+) = 2,5-dioxopentanoate + CO2 + H2O. It functions in the pathway carbohydrate acid metabolism; D-glucarate degradation; 2,5-dioxopentanoate from D-glucarate: step 2/2. The protein is Probable 5-dehydro-4-deoxyglucarate dehydratase of Pseudomonas fluorescens (strain Pf0-1).